We begin with the raw amino-acid sequence, 655 residues long: E3 ubiquitin-protein ligase TRIM32 (655 aa).

The RING-type zinc finger occupies 21–66; that stretch reads CPICMESFTEEQLRPKLLHCGHTICRQCLEKLLASSINGVRCPFCS. Phosphoserine; by CHEK2 is present on serine 56. A B box-type; atypical zinc finger spans residues 96 to 139; sequence VGLLMCRGCGRRLPRQFCRSCGVVLCEPCREADHQPPGHCTLPV. Zn(2+) contacts are provided by cysteine 101, cysteine 104, cysteine 124, and histidine 129. Residues 139–198 adopt a coiled-coil conformation; sequence VKEAAEERRRDFGEKLTRLRELTGELQRRKAALEGVSRDLQARYKAVLQEYGHEERRIQE. The interval 327–347 is disordered; sequence MDMSPEEVAPSPRASPAKQRS. A phosphoserine mark is found at serine 330, serine 337, and serine 341. NHL repeat units lie at residues 360-403, 417-460, 461-501, 564-607, and 608-648; these read LKKM…FNRK, DSFV…YTMD, GHCV…FTVD, GRQI…FPKG, and GGYS…YSYH.

Belongs to the TRIM/RBCC family. In terms of assembly, it self-associates. Interacts with DTNBP1. Interacts with PIAS4/PIASY upon treatment with UVB and TNF-alpha. Interacts with AMBRA1; promoting activation of ULK1 through unanchored 'Lys-63'-linked polyubiquitin chains. Interacts with TICAM1 and TAX1BP1; these interactions target TICAM1 to TAX1BP1-mediated selective autophagic degradation. Ubiquitinated. In terms of processing, phosphorylation at Ser-56 by CHEK2 under oxidative stress, activates the E3 ligase activity and promotes ATG7 ubiquitination leading to positive regulation of the autophagosme assembly. Ubiquitous. High expression in brain.

It is found in the cytoplasm. It catalyses the reaction S-ubiquitinyl-[E2 ubiquitin-conjugating enzyme]-L-cysteine + [acceptor protein]-L-lysine = [E2 ubiquitin-conjugating enzyme]-L-cysteine + N(6)-ubiquitinyl-[acceptor protein]-L-lysine.. The protein operates within protein modification; protein ubiquitination. In terms of biological role, E3 ubiquitin ligase that plays a role in various biological processes including neural stem cell differentiation, innate immunity, inflammatory resonse and autophagy. Plays a role in virus-triggered induction of IFN-beta and TNF-alpha by mediating the ubiquitination of STING1. Mechanistically, targets STING1 for 'Lys-63'-linked ubiquitination which promotes the interaction of STING1 with TBK1. Regulates bacterial clearance and promotes autophagy in Mycobacterium tuberculosis-infected macrophages. Negatively regulates TLR3/4-mediated innate immune and inflammatory response by triggering the autophagic degradation of TICAM1 in an E3 activity-independent manner. Plays an essential role in oxidative stress induced cell death by inducing loss of transmembrane potential and enhancing mitochondrial reactive oxygen species (ROS) production during oxidative stress conditions. Ubiquitinates XIAP and targets it for proteasomal degradation. Ubiquitinates DTNBP1 (dysbindin) and promotes its degradation. May ubiquitinate BBS2. Ubiquitinates PIAS4/PIASY and promotes its degradation in keratinocytes treated with UVB and TNF-alpha. Also acts as a regulator of autophagy by mediating formation of unanchored 'Lys-63'-linked polyubiquitin chains that activate ULK1: interaction with AMBRA1 is required for ULK1 activation. Positively regulates dendritic branching by promoting ubiquitination and subsequent degradation of the epigenetic factor CDYL. Under metabolic stress and phosphorylation by CHK2, mediates 'Lys-63'-linked ubiquitination of ATG7 at 'Lys-41' to initiate autophagy. In Mus musculus (Mouse), this protein is E3 ubiquitin-protein ligase TRIM32.